A 65-amino-acid polypeptide reads, in one-letter code: MMIYGLIACLIFVTSSIASPPITEDKSFNSVEVLVSLFRDDQKDYTVTSQFNNYTIDTKDWTIHT.

Belongs to the poxviridae C13 protein family.

The protein is Protein C13 of Vaccinia virus (strain Copenhagen) (VACV).